Here is a 727-residue protein sequence, read N- to C-terminus: MAPPAKRARRGLVPPGYKYLGPGNSLDQGEPTNPSDAAAKEHDEAYAAYLRSGKNPYLYFSPADQRFIDQTKDAKDWGGKIGHYFFRAKKAIAPVLTDTPDHPSTSRPTKPTKRSKPPPHIFINLAKKKKAGAGQVKRDNLAPMSDGAVQPDGGQPAVRNERATGSGNGSGGGGGGGSGGVGISTGTFNNQTEFKFLENGWVEITANSSRLVHLNMPESENYRRVVVNNMDKTAVNGNMALDDIHAQIVTPWSLVDANAWGVWFNPGDWQLIVNTMSELHLVSFEQEIFNVVLKTVSESATQPPTKVYNNDLTASLMVALDSNNTMPFTPAAMRSETLGFYPWKPTIPTPWRYYFQWDRTLIPSHTGTSGTPTNIYHGTDPDDVQFYTIENSVPVHLLRTGDEFATGTFFFDCKPCRLTHTWQTNRALGLPPFLNSLPQSEGATNFGDIGVQQDKRRGVTQMGNTNYITEATIMRPAEVGYSAPYYSFEASTQGPFKTPIAAGRGGAQTYENQAADGDPRYAFGRQHGQKTTTTGETPERFTYIAHQDTGRYPEGDWIQNINFNLPVTNDNVLLPTDPIGGKTGINYTNIFNTYGPLTALNNVPPVYPNGQIWDKEFDTDLKPRLHVNAPFVCQNNCPGQLFVKVAPNLTNEYDPDASANMSRIVTYSDFWWKGKLVFKAKLRASHTWNPIQQMSINVDNQFNYVPSNIGGMKIVYEKSQLAPRKLY.

Basic residues predominate over residues 1–10; that stretch reads MAPPAKRARR. Disordered regions lie at residues 1 to 39, 95 to 120, and 141 to 184; these read MAPP…DAAA, VLTD…PPPH, and LAPM…VGIS. Residues 4-13 carry the Nuclear localization signal motif; that stretch reads PAKRARRGLV. The interval 19–64 is phospholipase A2-like; sequence YLGPGNSLDQGEPTNPSDAAAKEHDEAYAAYLRSGKNPYLYFSPAD. Polar residues predominate over residues 25–35; the sequence is SLDQGEPTNPS. Residues 166 to 183 are compositionally biased toward gly residues; that stretch reads SGNGSGGGGGGGSGGVGI. Asn323 contributes to the Mg(2+) binding site. Cys633 and Cys637 form a disulfide bridge.

Belongs to the parvoviridae capsid protein family. In terms of assembly, interacts with host TFRC.

The protein resides in the virion. It localises to the host nucleus. Capsid protein self-assembles to form an icosahedral capsid with a T=1 symmetry, about 22 nm in diameter, and consisting of 60 copies of two size variants of the capsid proteins, VP1 and VP2, which differ by the presence of an N-terminal extension in the minor protein VP1. The capsid encapsulates the genomic ssDNA. Capsid proteins are responsible for the attachment to host cell receptor TFRC. This attachment induces virion internalization predominantly through clathrin-endocytosis. Binding to the host receptors also induces capsid rearrangements leading to surface exposure of VP1 N-terminus, specifically its phospholipase A2-like region and nuclear localization signal(s). VP1 N-terminus might serve as a lipolytic enzyme to breach the endosomal membrane during entry into host cell. Intracytoplasmic transport involves microtubules and interaction between capsid proteins and host dynein. Exposure of nuclear localization signal probably allows nuclear import of capsids. The polypeptide is Capsid protein VP1 (Canis lupus familiaris (Dog)).